A 199-amino-acid polypeptide reads, in one-letter code: Recombination protein RecR (199 aa).

The C4-type zinc-finger motif lies at 56-71 (CSICFNWSAEDPCEIC). The Toprim domain occupies 79-174 (STWCVVADVK…GLRMTRLAFG (96 aa)).

This sequence belongs to the RecR family.

Its function is as follows. May play a role in DNA repair. It seems to be involved in an RecBC-independent recombinational process of DNA repair. It may act with RecF and RecO. The polypeptide is Recombination protein RecR (Synechococcus sp. (strain JA-3-3Ab) (Cyanobacteria bacterium Yellowstone A-Prime)).